Reading from the N-terminus, the 207-residue chain is uncharacterized protein (207 aa).

2 disordered regions span residues 1–81 and 140–169; these read MNPT…GNTR and TSQS…PPKK. A compositionally biased stretch (polar residues) spans 21 to 40; that stretch reads FEQTNSSASLTQKNSSSETE. Residues 58-70 show a composition bias toward basic residues; the sequence is PTKRGSGRGRGRS. Polar residues predominate over residues 140 to 152; sequence TSQSIDAQPTPSQ. Residues 156–165 show a composition bias toward basic and acidic residues; that stretch reads AHHEPHEKRG.

It localises to the nucleus. The protein resides in the nucleolus. This is an uncharacterized protein from Schizosaccharomyces pombe (strain 972 / ATCC 24843) (Fission yeast).